A 1403-amino-acid chain; its full sequence is DNA-directed RNA polymerase subunit beta' (1403 aa).

4 residues coordinate Zn(2+): C71, C73, C86, and C89. Positions 462, 464, and 466 each coordinate Mg(2+). Zn(2+) is bound by residues C811, C885, C892, and C895.

It belongs to the RNA polymerase beta' chain family. As to quaternary structure, the RNAP catalytic core consists of 2 alpha, 1 beta, 1 beta' and 1 omega subunit. When a sigma factor is associated with the core the holoenzyme is formed, which can initiate transcription. It depends on Mg(2+) as a cofactor. The cofactor is Zn(2+).

It carries out the reaction RNA(n) + a ribonucleoside 5'-triphosphate = RNA(n+1) + diphosphate. Functionally, DNA-dependent RNA polymerase catalyzes the transcription of DNA into RNA using the four ribonucleoside triphosphates as substrates. The chain is DNA-directed RNA polymerase subunit beta' from Bartonella bacilliformis (strain ATCC 35685 / KC583 / Herrer 020/F12,63).